The following is a 452-amino-acid chain: MKVPVSGDVKEETEEENVEQEENQEAKVSLKPVIEDLSMELARKCTELISDIHYKEEYKKSKDKCTFVTDTPMLNHVKNIGAFISEAKYKGTIKADLSNCLYKDMPATIDSVFAREVSQLQSEVAYKQKHEAEKGFSDYTHMKEPPEVRRAMEVNRHQSNISYRKDMQGTHTYTAELDRPDIKKATQISKIISDAEYKKGQGIVNKEPSVIGRPDFEHAVGASKLSSQVKYKEKFDNEMKEKSHHYNPLGSAFFRQHQFAAVLASDWEYKRDFEENKGLYHFDAEAPEHLHHKGNATLQSQVKYREEYEKNKGKSMLEFVETPSYQSSKEAQKMQSEKVYKEDFEKEIKGRSSLDLDKTPAFLHVKHITNLMREKEYKKDLENEIKGKGMELSSEVLDIQRAKRASEMASEKDYKRDLETEIKGKGMQVSTDTLDVQRAKRASEMASQVRMV.

The tract at residues 1–26 (MKVPVSGDVKEETEEENVEQEENQEA) is disordered. Positions 11 to 23 (EETEEENVEQEEN) are enriched in acidic residues. Nebulin repeat units follow at residues 29-63 (SLKPVIEDLSMELARKCTELISDIHYKEEYKKSKD), 64-98 (KCTFVTDTPMLNHVKNIGAFISEAKYKGTIKADLS), 101-135 (LYKDMPATIDSVFAREVSQLQSEVAYKQKHEAEKG), 138-172 (DYTHMKEPPEVRRAMEVNRHQSNISYRKDMQGTHT), 173-199 (YTAELDRPDIKKATQISKIISDAEYKK), 206-240 (KEPSVIGRPDFEHAVGASKLSSQVKYKEKFDNEMK), 263-278 (LASDWEYKRDFEENKG), 279-313 (LYHFDAEAPEHLHHKGNATLQSQVKYREEYEKNKG), 315-349 (SMLEFVETPSYQSSKEAQKMQSEKVYKEDFEKEIK), 352-386 (SSLDLDKTPAFLHVKHITNLMREKEYKKDLENEIK), 389-423 (GMELSSEVLDIQRAKRASEMASEKDYKRDLETEIK), and 426-452 (GMQVSTDTLDVQRAKRASEMASQVRMV).

In terms of assembly, interacts (via nebulin repeats 1-5) with DESM (via rod region). Interacts (via SH3 domain) with XIRP2.

Its subcellular location is the cytoplasm. Binds to actin and plays an important role in the assembly of the Z-disk. May functionally link sarcomeric actin to the desmin intermediate filaments in the heart muscle sarcomeres. Isoform 2 might play a role in the assembly of focal adhesion. In Mus musculus (Mouse), this protein is Nebulette (Nebl).